Consider the following 480-residue polypeptide: Aspartyl/glutamyl-tRNA(Asn/Gln) amidotransferase subunit B (480 aa).

It belongs to the GatB/GatE family. GatB subfamily. As to quaternary structure, heterotrimer of A, B and C subunits.

It catalyses the reaction L-glutamyl-tRNA(Gln) + L-glutamine + ATP + H2O = L-glutaminyl-tRNA(Gln) + L-glutamate + ADP + phosphate + H(+). The enzyme catalyses L-aspartyl-tRNA(Asn) + L-glutamine + ATP + H2O = L-asparaginyl-tRNA(Asn) + L-glutamate + ADP + phosphate + 2 H(+). In terms of biological role, allows the formation of correctly charged Asn-tRNA(Asn) or Gln-tRNA(Gln) through the transamidation of misacylated Asp-tRNA(Asn) or Glu-tRNA(Gln) in organisms which lack either or both of asparaginyl-tRNA or glutaminyl-tRNA synthetases. The reaction takes place in the presence of glutamine and ATP through an activated phospho-Asp-tRNA(Asn) or phospho-Glu-tRNA(Gln). In Streptococcus pneumoniae (strain CGSP14), this protein is Aspartyl/glutamyl-tRNA(Asn/Gln) amidotransferase subunit B.